A 321-amino-acid polypeptide reads, in one-letter code: MESRINWGIIGCGNVAEVKSGPAFYKTENSTLVAVMRRNEDKVIDFANRHGVANWTTNAEALIQNDLINAVYIATPPSSHLQYALRAINVGKNVYLEKPMVLNNHEANILVEAVKRSNVKVTVAHYRRELPVYLKIKELLDSNVIGNVISAEIQIKQTRNTNLIAKTEVNWRTIPEISGGGYFHDIAPHQIDLMCHYFGEVENIKKGSCKENQVSHQDVSGEVLFKNGVQFSGTWNFNALEDKDECTIKGERGSISFSFYTSTITVSKNGLIESYHYENPEHVQQPMIEKTVGYFLAHNSNPCSVEEAAMVTHIMDVFCGT.

This sequence belongs to the Gfo/Idh/MocA family.

It is found in the cell surface. Its function is as follows. Oxidoreductase that may be involved in ulvan degradation. Ulvan is the main polysaccharide component of the Ulvales (green seaweed) cell wall. It is composed of disaccharide building blocks comprising 3-sulfated rhamnose (Rha3S) linked to D-glucuronic acid (GlcA), L-iduronic acid (IduA), or D-xylose (Xyl). The chain is Oxidoreductase P35 from Formosa agariphila (strain DSM 15362 / KCTC 12365 / LMG 23005 / KMM 3901 / M-2Alg 35-1).